The chain runs to 718 residues: MSNTLTTERNITNSPTAAQLNEKESGKKEEEWIVGVLTTSDRVSQGIAIDQSGPEIVAIIKNQLKQMMGESCSINVITVYKVVPDEIEHIQQMITQWTHLKYKLILTTGGTGFTPRDVTPEAIKPLLNRRTKGIEIAMLKTSLDITPHAMLSRPIAGIRDQTLIITLPGSVKAIRENLGVVLPAIPHAIGLINSKPKSSLPESHRSKDYIKNSQIDSNLIINQNNQNNNNNNNNNNNNNNNNNSHNHHHHHHHSCGGSGKRGSSYNMTPVDEAIKIILEQCDNINNELEKVEITKSLGRILGEDISSVEPFPNFRASIKDGYAIRSKDGIGKYRLLGDSVAGNTGENLIPPQPQQPTNSINDDDNEKYCVRITTGAKIPDGYDSVVMIEETEMIGENMVSIEVTCKPGQDIREIGSDIASGTIVLNKGDKIGCAEIGLLATLGIQWVHCPKLPSISIISTGDELTDYQSKSDSMKSGIIRDSNSPTLATILQEISNHFGECCSRDNINLVGIIPDKLENLKDTLLDCSKKSDIIITSGGVSMGHLDLVKPLLEKIGTVHFGRVNMKPGKPLTFSTITTTTTDNNNQEEEKKKKTTLVFSLPGNPVSTVVTFYLFVVPALRKLGGFGIKNNGSQLNLPCVEVKLLDRIQLDHERPEYHRCTIEWDFQEHCFVSKSTGSQASCRLLSLKQANALLVLPQKHGHLEKGSMVKAILIGPINN.

Over residues 1-19 (MSNTLTTERNITNSPTAAQ) the composition is skewed to polar residues. The interval 1–26 (MSNTLTTERNITNSPTAAQLNEKESG) is disordered. The MPT Mo-transferase stretch occupies residues 31–176 (EWIVGVLTTS…LPGSVKAIRE (146 aa)). Residues 222–244 (NQNNQNNNNNNNNNNNNNNNNNS) are compositionally biased toward low complexity. Disordered regions lie at residues 222–266 (NQNN…SSYN) and 344–364 (TGEN…NDDD). The span at 245 to 254 (HNHHHHHHHS) shows a compositional bias: basic residues. The MPT adenylyltransferase stretch occupies residues 260–718 (KRGSSYNMTP…KAILIGPINN (459 aa)).

It in the N-terminal section; belongs to the MoaB/Mog family. This sequence in the C-terminal section; belongs to the MoeA family. As to quaternary structure, homotrimer, homodimer and homooligomer. Requires Mg(2+) as cofactor.

The protein localises to the cell membrane. It is found in the cytoplasm. Its subcellular location is the cytosol. The protein resides in the cytoskeleton. The enzyme catalyses molybdopterin + ATP + H(+) = adenylyl-molybdopterin + diphosphate. It catalyses the reaction adenylyl-molybdopterin + molybdate = Mo-molybdopterin + AMP + H(+). Its pathway is cofactor biosynthesis; molybdopterin biosynthesis. Functionally, microtubule-associated protein involved in membrane protein-cytoskeleton interactions. In terms of biological role, also has a catalytic activity and catalyzes two steps in the biosynthesis of the molybdenum cofactor. In the first step, molybdopterin is adenylated. Subsequently, molybdate is inserted into adenylated molybdopterin and AMP is released. The chain is Gephyrin (gphn) from Dictyostelium discoideum (Social amoeba).